The chain runs to 253 residues: Phosphate import ATP-binding protein PstB 1 (253 aa).

One can recognise an ABC transporter domain in the interval 7–248; that stretch reads LQIRDLSVYY…PKRKETEDYI (242 aa). 39 to 46 contributes to the ATP binding site; it reads GPSGSGKS.

This sequence belongs to the ABC transporter superfamily. Phosphate importer (TC 3.A.1.7) family. The complex is composed of two ATP-binding proteins (PstB), two transmembrane proteins (PstC and PstA) and a solute-binding protein (PstS).

It is found in the cell membrane. The catalysed reaction is phosphate(out) + ATP + H2O = ADP + 2 phosphate(in) + H(+). Part of the ABC transporter complex PstSACB involved in phosphate import. Responsible for energy coupling to the transport system. The chain is Phosphate import ATP-binding protein PstB 1 from Streptococcus pyogenes serotype M12 (strain MGAS9429).